Reading from the N-terminus, the 837-residue chain is Striatin-interacting protein 1 (837 aa).

Met1 carries the N-acetylmethionine modification. Disordered stretches follow at residues 1 to 67 (MEPA…ESPD) and 333 to 423 (AASP…KGLP). Pro residues predominate over residues 18 to 35 (PQPPPPPPPATAQPPPGA). The segment covering 47 to 60 (KAREFNRNQRKDSE) has biased composition (basic and acidic residues). A phosphoserine mark is found at Ser59, Ser335, and Ser339. Over residues 356–377 (KALIKQDNLDAFNERDPYKADD) the composition is skewed to basic and acidic residues. Positions 378 to 391 (SREEEEENDDDSSL) are enriched in acidic residues. Position 788 is a phosphoserine (Ser788). A required for STRIPAK core complex formation region spans residues 796-837 (DNCLQSVLGQRVDLPEDFQMNYDLWLEREVFSKPISWEELLQ).

It belongs to the STRIP family. Part of the core of STRIPAK complexes composed of PP2A catalytic and scaffolding subunits, the striatins (PP2A regulatory subunits), the striatin-associated proteins MOB4, STRIP1 and STRIP2, PDCD10 and members of the STE20 kinases, such as STK24 and STK26. The STRIPAK complex can be extended by adapter proteins such as SLMAP:SIKE1, CTTNBP2 or CTTNBP2NL. Interacts with CDC42BPB. Interacts with CTTNBP2NL.

Its subcellular location is the cytoplasm. In terms of biological role, plays a role in the regulation of cell morphology and cytoskeletal organization. Required in the cortical actin filament dynamics and cell shape. Part of the striatin-interacting phosphatase and kinase (STRIPAK) complexes. STRIPAK complexes have critical roles in protein (de)phosphorylation and are regulators of multiple signaling pathways including Hippo, MAPK, nuclear receptor and cytoskeleton remodeling. Different types of STRIPAK complexes are involved in a variety of biological processes such as cell growth, differentiation, apoptosis, metabolism and immune regulation. The sequence is that of Striatin-interacting protein 1 (Strip1) from Mus musculus (Mouse).